Reading from the N-terminus, the 273-residue chain is Progestin and adipoQ receptor family member 4 (273 aa).

5 helical membrane passes run 52 to 72 (IYTH…TMPW), 79 to 99 (GWLG…SVLY), 115 to 135 (LLAL…LPII), 185 to 205 (LLVF…SLPC), and 245 to 265 (LLSV…LLWA).

Belongs to the ADIPOR family. Interacts with CERS2 and CERS5; the interaction regulates CERS2 and CERS5 stabilities and activities and is inhibited in presence of ceramides. Expressed in adipose tissue.

The protein resides in the golgi apparatus membrane. Plays a role in maintaining adipose tissue function through the regulation of ceramide levels. Mediates the stability of ceramide synthetases, CERS2 and CERS5, and their activities. This chain is Progestin and adipoQ receptor family member 4, found in Mus musculus (Mouse).